The following is a 1219-amino-acid chain: Regulator of telomere elongation helicase 1 (1219 aa).

One can recognise a Helicase ATP-binding domain in the interval N7–H296. S42–T49 contributes to the ATP binding site. C145, C163, C172, and C207 together coordinate [4Fe-4S] cluster. A Nuclear localization signal motif is present at residues K151 to V167. The short motif at D250–H253 is the DEAH box element. Disordered regions lie at residues T287 to P306, P757 to T786, E839 to K877, R979 to K1005, D1017 to K1054, C1132 to E1151, and L1159 to L1219. The segment covering P757 to P766 has biased composition (low complexity). Basic and acidic residues predominate over residues S863–G873. The Nuclear localization signal signature appears at P871–K877. Polar residues predominate over residues K1176–L1185. Positions Q1178–L1185 match the PIP-box motif. The span at A1200–L1219 shows a compositional bias: low complexity.

This sequence belongs to the helicase family. RAD3/XPD subfamily. In terms of assembly, interacts with TERF1. Interacts (via PIP-box) with PCNA; the interaction is direct and essential for suppressing telomere fragility. Interacts with MMS19; the interaction mediates the association of RTEL1 with the cytosolic iron-sulfur protein assembly (CIA) complex.

It localises to the nucleus. It catalyses the reaction ATP + H2O = ADP + phosphate + H(+). In terms of biological role, a probable ATP-dependent DNA helicase implicated in telomere-length regulation, DNA repair and the maintenance of genomic stability. Acts as an anti-recombinase to counteract toxic recombination and limit crossover during meiosis. Regulates meiotic recombination and crossover homeostasis by physically dissociating strand invasion events and thereby promotes noncrossover repair by meiotic synthesis dependent strand annealing (SDSA) as well as disassembly of D loop recombination intermediates. Also disassembles T loops and prevents telomere fragility by counteracting telomeric G4-DNA structures, which together ensure the dynamics and stability of the telomere. This chain is Regulator of telomere elongation helicase 1, found in Homo sapiens (Human).